The following is a 378-amino-acid chain: MTERECRLALSQARRLVIKVGTSTLTHKTGKLNLGRMERLVRELVDQVNAGRQVVLVTSGAVGAGMGRLGLKEKPRTLPEKQAAAAVGQGLLMHMYEKFFSDYGLLVAQVLLTRADLADRSRYLNSRHTLAALLRLGVVPIVNENDTVAVEEIRVGDNDTLSALVAGLVDADILFLLTDTGGLFTANPVTSDDAVLLPCVTEITPEIEALAGGAGSTWSTGGMATKIQAARLATSFGIPVVIASGLQAGQIEAVLKGEEIGTIFLPREHRAHTRKRWLAYAPAVQGQIQVDAGAARAICKNGKSLLPGGVIAVDGDFDQGAIVSIVDPAGKEIARGMANYPAAAISRIKGRKTGEIGEILGYKDYDEIVHRDNLIVLG.

Residue Lys19 coordinates ATP. Substrate contacts are provided by Ser59, Asp146, and Asn158. ATP contacts are provided by residues 178-179 (TD) and 220-226 (TGGMATK). A PUA domain is found at 285-363 (QGQIQVDAGA…GEIGEILGYK (79 aa)).

Belongs to the glutamate 5-kinase family.

It localises to the cytoplasm. It catalyses the reaction L-glutamate + ATP = L-glutamyl 5-phosphate + ADP. Its pathway is amino-acid biosynthesis; L-proline biosynthesis; L-glutamate 5-semialdehyde from L-glutamate: step 1/2. Catalyzes the transfer of a phosphate group to glutamate to form L-glutamate 5-phosphate. The chain is Glutamate 5-kinase from Moorella thermoacetica (strain ATCC 39073 / JCM 9320).